A 223-amino-acid polypeptide reads, in one-letter code: MTKNVLMLHGLAQSGDYFASKTKGFRAEMEKLGYKLYYPTAPNEFPPADVPDFLGEVIADAPGDGENTGVLAWLENDPSTGGYFIPQTTIDYLHNYVLENGPFAGIVGFSQGAGVAGYLATDFNGLLGLTTEEQPPLEFFMAVSGFRFQPQQYQEQYDLHPISVPSLHVQGELDTITEPAKVQGLYNSCTEDSRTLLMHSGGHFVPNSRGFVRKVAQWLQQLT.

Active-site charge relay system residues include Ser110, Asp174, and His203.

This sequence belongs to the AB hydrolase 3 family.

The protein localises to the cytoplasm. Its function is as follows. Serine hydrolase of unknown specificity. This chain is Family of serine hydrolases 2 (FSH2), found in Saccharomyces cerevisiae (strain ATCC 204508 / S288c) (Baker's yeast).